Reading from the N-terminus, the 221-residue chain is N-(5'-phosphoribosyl)anthranilate isomerase (221 aa).

Belongs to the TrpF family.

It carries out the reaction N-(5-phospho-beta-D-ribosyl)anthranilate = 1-(2-carboxyphenylamino)-1-deoxy-D-ribulose 5-phosphate. Its pathway is amino-acid biosynthesis; L-tryptophan biosynthesis; L-tryptophan from chorismate: step 3/5. In Chlorobaculum tepidum (strain ATCC 49652 / DSM 12025 / NBRC 103806 / TLS) (Chlorobium tepidum), this protein is N-(5'-phosphoribosyl)anthranilate isomerase.